Here is a 112-residue protein sequence, read N- to C-terminus: Phosphoribosyl-AMP cyclohydrolase (112 aa).

Aspartate 76 contacts Mg(2+). A Zn(2+)-binding site is contributed by cysteine 77. Mg(2+) is bound by residues aspartate 78 and aspartate 80. Zn(2+) is bound by residues cysteine 93 and cysteine 100.

The protein belongs to the PRA-CH family. Homodimer. Mg(2+) serves as cofactor. The cofactor is Zn(2+).

The protein resides in the cytoplasm. The catalysed reaction is 1-(5-phospho-beta-D-ribosyl)-5'-AMP + H2O = 1-(5-phospho-beta-D-ribosyl)-5-[(5-phospho-beta-D-ribosylamino)methylideneamino]imidazole-4-carboxamide. Its pathway is amino-acid biosynthesis; L-histidine biosynthesis; L-histidine from 5-phospho-alpha-D-ribose 1-diphosphate: step 3/9. Catalyzes the hydrolysis of the adenine ring of phosphoribosyl-AMP. The chain is Phosphoribosyl-AMP cyclohydrolase from Streptococcus thermophilus (strain ATCC BAA-491 / LMD-9).